The chain runs to 464 residues: MNSFSPTEDTIAAIATAVSPGQGSIAAIRISGSSAIETSKNIVDVPGIQDWSTHKVLYGHVTEENRKKYIDEVLILVMKGPRSFTGEDVVEIHCHGGIIPVQKILERILAFPSVRRAEPGEFSQRAVLNGRLSLTQAESISELVSARSRKAAELAINGIEGNIQTTIQSIRKRLIEQLTEIEARIDFEEDLPLLDEKHVKNEIVAIKKDLNELIDNAKRGSWVRSGLKVALTGKPNVGKSSLMNRLSKQEKAIVTDLPGTTRDILESEIILEGIPVTFIDTAGLRDTKDIIEKIGISRTKKTLIHADLIILIFDYSSGWTNEDESILKQLPINIPLLIVGNKSDLTNDQSFEKVPKYILKKENLVIISAKTGNGEDDLINYLLKKCGSSQTHGLDIALNERQLDLAKSTMKSLENINKVFDEKLPWDFWTIDLRQAINYLGELTGEDLTESLLDNIFSKFCIGK.

(6S)-5-formyl-5,6,7,8-tetrahydrofolate is bound by residues Arg29, Glu91, and Arg131. The TrmE-type G domain occupies Gly226–Gly387. Asn236 contributes to the K(+) binding site. GTP is bound by residues Asn236–Ser241, Thr255–Thr261, and Asp280–Gly283. Ser240 provides a ligand contact to Mg(2+). Thr255, Leu257, and Thr260 together coordinate K(+). Position 261 (Thr261) interacts with Mg(2+). Lys464 contacts (6S)-5-formyl-5,6,7,8-tetrahydrofolate.

Belongs to the TRAFAC class TrmE-Era-EngA-EngB-Septin-like GTPase superfamily. TrmE GTPase family. In terms of assembly, homodimer. Heterotetramer of two MnmE and two MnmG subunits. Requires K(+) as cofactor.

Its subcellular location is the cytoplasm. Its function is as follows. Exhibits a very high intrinsic GTPase hydrolysis rate. Involved in the addition of a carboxymethylaminomethyl (cmnm) group at the wobble position (U34) of certain tRNAs, forming tRNA-cmnm(5)s(2)U34. This chain is tRNA modification GTPase MnmE, found in Prochlorococcus marinus (strain NATL2A).